Consider the following 252-residue polypeptide: Type III pantothenate kinase (252 aa).

ATP is bound at residue 6 to 13; it reads DIGNTSTA. 104-107 is a substrate binding site; it reads GADR. The active-site Proton acceptor is D106. D128 serves as a coordination point for K(+). ATP is bound at residue T131. Substrate is bound at residue T183.

This sequence belongs to the type III pantothenate kinase family. As to quaternary structure, homodimer. NH4(+) serves as cofactor. The cofactor is K(+).

It localises to the cytoplasm. It carries out the reaction (R)-pantothenate + ATP = (R)-4'-phosphopantothenate + ADP + H(+). Its pathway is cofactor biosynthesis; coenzyme A biosynthesis; CoA from (R)-pantothenate: step 1/5. In terms of biological role, catalyzes the phosphorylation of pantothenate (Pan), the first step in CoA biosynthesis. The polypeptide is Type III pantothenate kinase (Thermus thermophilus (strain ATCC BAA-163 / DSM 7039 / HB27)).